The sequence spans 420 residues: Glutamyl-tRNA reductase (420 aa).

Residues 49–52, Ser109, 114–116, and Gln120 each bind substrate; these read TCNR and EPQ. The active-site Nucleophile is the Cys50. Residue 189–194 coordinates NADP(+); the sequence is GAGETI.

Belongs to the glutamyl-tRNA reductase family. As to quaternary structure, homodimer.

It catalyses the reaction (S)-4-amino-5-oxopentanoate + tRNA(Glu) + NADP(+) = L-glutamyl-tRNA(Glu) + NADPH + H(+). The protein operates within porphyrin-containing compound metabolism; protoporphyrin-IX biosynthesis; 5-aminolevulinate from L-glutamyl-tRNA(Glu): step 1/2. Its function is as follows. Catalyzes the NADPH-dependent reduction of glutamyl-tRNA(Glu) to glutamate 1-semialdehyde (GSA). In Photorhabdus laumondii subsp. laumondii (strain DSM 15139 / CIP 105565 / TT01) (Photorhabdus luminescens subsp. laumondii), this protein is Glutamyl-tRNA reductase.